The sequence spans 510 residues: ATP synthase subunit alpha, chloroplastic (510 aa).

170–177 (GDRQTGKT) serves as a coordination point for ATP.

The protein belongs to the ATPase alpha/beta chains family. As to quaternary structure, F-type ATPases have 2 components, CF(1) - the catalytic core - and CF(0) - the membrane proton channel. CF(1) has five subunits: alpha(3), beta(3), gamma(1), delta(1), epsilon(1). CF(0) has four main subunits: a, b, b' and c.

The protein resides in the plastid. The protein localises to the chloroplast thylakoid membrane. It carries out the reaction ATP + H2O + 4 H(+)(in) = ADP + phosphate + 5 H(+)(out). Its function is as follows. Produces ATP from ADP in the presence of a proton gradient across the membrane. The alpha chain is a regulatory subunit. This Lotus japonicus (Lotus corniculatus var. japonicus) protein is ATP synthase subunit alpha, chloroplastic.